Here is a 228-residue protein sequence, read N- to C-terminus: Lipoprotein-releasing system ATP-binding protein LolD (228 aa).

One can recognise an ABC transporter domain in the interval 6–225 (LEAKDVYKHF…ILHMQDGLWV (220 aa)). ATP is bound at residue 42 to 49 (GASGSGKS).

This sequence belongs to the ABC transporter superfamily. Lipoprotein translocase (TC 3.A.1.125) family. As to quaternary structure, the complex is composed of two ATP-binding proteins (LolD) and two transmembrane proteins (LolC and LolE).

It localises to the cell inner membrane. Its function is as follows. Part of the ABC transporter complex LolCDE involved in the translocation of mature outer membrane-directed lipoproteins, from the inner membrane to the periplasmic chaperone, LolA. Responsible for the formation of the LolA-lipoprotein complex in an ATP-dependent manner. In Acinetobacter baylyi (strain ATCC 33305 / BD413 / ADP1), this protein is Lipoprotein-releasing system ATP-binding protein LolD.